The primary structure comprises 207 residues: Small ribosomal subunit protein uS4A (207 aa).

Positions 98 to 163 (TRLDNLVYRL…SPKFKELKEN (66 aa)) constitute an S4 RNA-binding domain.

This sequence belongs to the universal ribosomal protein uS4 family. In terms of assembly, part of the 30S ribosomal subunit. Contacts protein S5. The interaction surface between S4 and S5 is involved in control of translational fidelity.

In terms of biological role, one of the primary rRNA binding proteins, it binds directly to 16S rRNA where it nucleates assembly of the body of the 30S subunit. Functionally, with S5 and S12 plays an important role in translational accuracy. The sequence is that of Small ribosomal subunit protein uS4A from Alkaliphilus metalliredigens (strain QYMF).